Consider the following 445-residue polypeptide: Tubulin beta-1 chain (445 aa).

8 residues coordinate GTP: glutamine 11, glutamate 69, serine 138, glycine 142, threonine 143, glycine 144, asparagine 204, and asparagine 226. A Mg(2+)-binding site is contributed by glutamate 69. The segment at 426–445 (QDATAEDEEEYEDEEEEMAA) is disordered. The segment covering 429–445 (TAEDEEEYEDEEEEMAA) has biased composition (acidic residues).

This sequence belongs to the tubulin family. As to quaternary structure, dimer of alpha and beta chains. A typical microtubule is a hollow water-filled tube with an outer diameter of 25 nm and an inner diameter of 15 nM. Alpha-beta heterodimers associate head-to-tail to form protofilaments running lengthwise along the microtubule wall with the beta-tubulin subunit facing the microtubule plus end conferring a structural polarity. Microtubules usually have 13 protofilaments but different protofilament numbers can be found in some organisms and specialized cells. It depends on Mg(2+) as a cofactor.

The protein localises to the cytoplasm. It localises to the cytoskeleton. Functionally, tubulin is the major constituent of microtubules, a cylinder consisting of laterally associated linear protofilaments composed of alpha- and beta-tubulin heterodimers. Microtubules grow by the addition of GTP-tubulin dimers to the microtubule end, where a stabilizing cap forms. Below the cap, tubulin dimers are in GDP-bound state, owing to GTPase activity of alpha-tubulin. This chain is Tubulin beta-1 chain (TUBB1), found in Eleusine indica (Goosegrass).